Reading from the N-terminus, the 464-residue chain is ATP synthase subunit beta (464 aa).

Position 153–160 (153–160) interacts with ATP; the sequence is GGAGVGKT.

It belongs to the ATPase alpha/beta chains family. As to quaternary structure, F-type ATPases have 2 components, CF(1) - the catalytic core - and CF(0) - the membrane proton channel. CF(1) has five subunits: alpha(3), beta(3), gamma(1), delta(1), epsilon(1). CF(0) has three main subunits: a(1), b(2) and c(9-12). The alpha and beta chains form an alternating ring which encloses part of the gamma chain. CF(1) is attached to CF(0) by a central stalk formed by the gamma and epsilon chains, while a peripheral stalk is formed by the delta and b chains.

Its subcellular location is the cell inner membrane. It catalyses the reaction ATP + H2O + 4 H(+)(in) = ADP + phosphate + 5 H(+)(out). Functionally, produces ATP from ADP in the presence of a proton gradient across the membrane. The catalytic sites are hosted primarily by the beta subunits. This Burkholderia ambifaria (strain ATCC BAA-244 / DSM 16087 / CCUG 44356 / LMG 19182 / AMMD) (Burkholderia cepacia (strain AMMD)) protein is ATP synthase subunit beta.